Here is a 371-residue protein sequence, read N- to C-terminus: Protein SOMBRERO (371 aa).

Residues 17–166 (VPPGFRFHPT…GWVVCRVFKK (150 aa)) form the NAC domain. A DNA-binding region spans residues 118-172 (IGLRKTLVFYTGRAPHGQKTEWIMHEYRLDDSENEIQEDGWVVCRVFKKKNHFRG). Disordered stretches follow at residues 176 to 213 (EQEQ…LILH) and 316 to 355 (VQNH…NQRF). The span at 192 to 201 (NDHDHHHHID) shows a compositional bias: basic and acidic residues. Low complexity-rich tracts occupy residues 202 to 213 (SNSNNHSPLILH) and 340 to 349 (GNNNGGSSSS).

As to expression, accumulates in maturing root cap cells, in both COL and LRC cells.

The protein resides in the nucleus. In terms of biological role, transcription regulator. Together with BRN1 and BRN2, regulates cellular maturation of root cap. Represses stem cell-like divisions in the root cap daughter cells, and thus promotes daughter cell fate. Inhibits expression of its positive regulator FEZ in a feedback loop for controlled switches in cell division plane. Promotes the expression of genes involved in secondary cell walls (SCW) biosynthesis. In Arabidopsis thaliana (Mouse-ear cress), this protein is Protein SOMBRERO (SMB).